Here is an 806-residue protein sequence, read N- to C-terminus: Glycerol-3-phosphate acyltransferase (806 aa).

The HXXXXD motif signature appears at 305–310 (CHRSHM).

It belongs to the GPAT/DAPAT family.

It is found in the cell inner membrane. It carries out the reaction sn-glycerol 3-phosphate + an acyl-CoA = a 1-acyl-sn-glycero-3-phosphate + CoA. It functions in the pathway phospholipid metabolism; CDP-diacylglycerol biosynthesis; CDP-diacylglycerol from sn-glycerol 3-phosphate: step 1/3. This Enterobacter sp. (strain 638) protein is Glycerol-3-phosphate acyltransferase.